The following is a 541-amino-acid chain: Phosphoenolpyruvate carboxykinase (ATP) (541 aa).

243-250 (GLSGTGKT) contributes to the ATP binding site.

It belongs to the phosphoenolpyruvate carboxykinase (ATP) family.

It carries out the reaction oxaloacetate + ATP = phosphoenolpyruvate + ADP + CO2. The protein operates within carbohydrate biosynthesis; gluconeogenesis. This chain is Phosphoenolpyruvate carboxykinase (ATP) (PCK1), found in Eremothecium gossypii (strain ATCC 10895 / CBS 109.51 / FGSC 9923 / NRRL Y-1056) (Yeast).